Consider the following 733-residue polypeptide: Protein ROG3 (733 aa).

The PY-motif signature appears at P460–Y463. The disordered stretch occupies residues R518 to P566. Residues L523 to L540 are compositionally biased toward low complexity. The short motif at P625–Y628 is the PY-motif element. Disordered regions lie at residues Q636–T658 and E693–R733. The segment covering R646–T658 has biased composition (low complexity).

Belongs to the arrestin family. As to quaternary structure, interacts with RSP5 via its 2 PY-motifs.

Functionally, involved in resistance to GST substrate o-dinitrobenzene (o-DNB). This Saccharomyces cerevisiae (strain ATCC 204508 / S288c) (Baker's yeast) protein is Protein ROG3 (ROG3).